A 266-amino-acid polypeptide reads, in one-letter code: Ribosomal RNA small subunit methyltransferase A (266 aa).

Positions 10, 12, 37, 58, 82, and 105 each coordinate S-adenosyl-L-methionine.

Belongs to the class I-like SAM-binding methyltransferase superfamily. rRNA adenine N(6)-methyltransferase family. RsmA subfamily.

The protein resides in the cytoplasm. The catalysed reaction is adenosine(1518)/adenosine(1519) in 16S rRNA + 4 S-adenosyl-L-methionine = N(6)-dimethyladenosine(1518)/N(6)-dimethyladenosine(1519) in 16S rRNA + 4 S-adenosyl-L-homocysteine + 4 H(+). Its function is as follows. Specifically dimethylates two adjacent adenosines (A1518 and A1519) in the loop of a conserved hairpin near the 3'-end of 16S rRNA in the 30S particle. May play a critical role in biogenesis of 30S subunits. The polypeptide is Ribosomal RNA small subunit methyltransferase A (Mycoplasma capricolum subsp. capricolum (strain California kid / ATCC 27343 / NCTC 10154)).